An 89-amino-acid chain; its full sequence is MARSLRKGPFIDEHLIKKVLVAQEKNDRKPIKTWSRRSVVVPEMIGLTIAVHNGRVHVPVSINENMIGHKLGEFAITRTFKGHSGDRKV.

It belongs to the universal ribosomal protein uS19 family.

Its function is as follows. Protein S19 forms a complex with S13 that binds strongly to the 16S ribosomal RNA. The protein is Small ribosomal subunit protein uS19 of Ruthia magnifica subsp. Calyptogena magnifica.